The following is a 39-amino-acid chain: Photosystem II reaction center protein J (39 aa).

A helical membrane pass occupies residues 7 to 27 (IPLWLVATIAGLGVIAVLGLF).

Belongs to the PsbJ family. In terms of assembly, PSII is composed of 1 copy each of membrane proteins PsbA, PsbB, PsbC, PsbD, PsbE, PsbF, PsbH, PsbI, PsbJ, PsbK, PsbL, PsbM, PsbT, PsbX, PsbY, PsbZ, Psb30/Ycf12, peripheral proteins PsbO, CyanoQ (PsbQ), PsbU, PsbV and a large number of cofactors. It forms dimeric complexes.

It is found in the cellular thylakoid membrane. One of the components of the core complex of photosystem II (PSII). PSII is a light-driven water:plastoquinone oxidoreductase that uses light energy to abstract electrons from H(2)O, generating O(2) and a proton gradient subsequently used for ATP formation. It consists of a core antenna complex that captures photons, and an electron transfer chain that converts photonic excitation into a charge separation. The protein is Photosystem II reaction center protein J of Microcystis aeruginosa (strain NIES-843 / IAM M-2473).